We begin with the raw amino-acid sequence, 154 residues long: CASP-like protein 5B3 (154 aa).

The Cytoplasmic segment spans residues 1–17; the sequence is MKDVVGSPGTWSGMSLR. Residues 18 to 38 form a helical membrane-spanning segment; sequence VSQCVFAGASVVAMASAYGFS. An N-linked (GlcNAc...) asparagine glycan is attached at asparagine 39. Residues 39 to 42 are Extracellular-facing; it reads NYTA. Residues 43–63 traverse the membrane as a helical segment; sequence FCYLIASMGLQLLWSFGLACL. Topologically, residues 64 to 77 are cytoplasmic; it reads DIYSLQTKRDLHNP. The helical transmembrane segment at 78–98 threads the bilayer; sequence VLVSLFVVGDWVTAILSFAAA. Topologically, residues 99 to 129 are extracellular; the sequence is SASAGVTILFERDVHFCRMYPQLSCGRYELS. A helical membrane pass occupies residues 130–150; sequence VILAFITWSFIATSAVSMFWL. Over 151–154 the chain is Cytoplasmic; sequence LASL.

The protein belongs to the Casparian strip membrane proteins (CASP) family. Homodimer and heterodimers.

Its subcellular location is the cell membrane. The polypeptide is CASP-like protein 5B3 (Oryza sativa subsp. indica (Rice)).